A 969-amino-acid polypeptide reads, in one-letter code: Rab3 GTPase-activating protein catalytic subunit (969 aa).

Basic and acidic residues predominate over residues 532–549 (DDGKKSSSSDGARDRSRG). A disordered region spans residues 532–613 (DDGKKSSSSD…PEGRLQPHGT (82 aa)). Over residues 550-572 (APEGAGPEGAGPAEAAGKSWDSW) the composition is skewed to low complexity. The span at 573–589 (SDSEDEFFECVSDTEEM) shows a compositional bias: acidic residues. Basic and acidic residues predominate over residues 590–608 (KEDKEEAENRSRSKPEGRL).

This sequence belongs to the Rab3-GAP catalytic subunit family. The Rab3 GTPase-activating complex is a heterodimer composed of rab3gap1 and rab3gap2. The Rab3 GTPase-activating complex interacts with DMXL2. Interacts with LMAN1.

Its subcellular location is the cytoplasm. It is found in the endoplasmic reticulum. The protein resides in the golgi apparatus. It localises to the cis-Golgi network. Its function is as follows. Catalytic subunit of the Rab3 GTPase-activating (Rab3GAP) complex composed of rab3gap1 and rab3gap2, which has GTPase-activating protein (GAP) activity towards various Rab3 subfamily members (RAB3A, RAB3B, RAB3C and RAB3D), RAB5A and RAB43, and guanine nucleotide exchange factor (GEF) activity towards RAB18. As part of the Rab3GAP complex, acts as a GAP for Rab3 proteins by converting active RAB3-GTP to the inactive form RAB3-GDP. Rab3 proteins are involved in regulated exocytosis of neurotransmitters and hormones. The Rab3GAP complex, acts as a GEF for RAB18 by promoting the conversion of inactive RAB18-GDP to the active form RAB18-GTP. Recruits and stabilizes RAB18 at the cis-Golgi membrane where RAB18 is most likely activated. Also involved in RAB18 recruitment at the endoplasmic reticulum (ER) membrane where it maintains proper ER structure. Required for normal eye and brain development. May participate in neurodevelopmental processes such as proliferation, migration and differentiation before synapse formation, and non-synaptic vesicular release of neurotransmitters. The protein is Rab3 GTPase-activating protein catalytic subunit (rab3gap1) of Danio rerio (Zebrafish).